The chain runs to 80 residues: Defensin-like protein 50 (80 aa).

An N-terminal signal peptide occupies residues 1–27 (MGFTKIVVTFFLVVMLAVSSSSQNAMA). 4 disulfides stabilise this stretch: Cys-39–Cys-79, Cys-43–Cys-66, Cys-52–Cys-77, and Cys-56–Cys-78.

It belongs to the DEFL family.

The protein localises to the secreted. The polypeptide is Defensin-like protein 50 (LCR49) (Arabidopsis thaliana (Mouse-ear cress)).